The chain runs to 199 residues: Small ribosomal subunit protein uS14m (199 aa).

Residues 28–67 (LSTPAPEPAKPSSEETTESTEPATSVEDAGEPMKEKRITQ) are disordered.

The protein belongs to the universal ribosomal protein uS14 family. Component of the mitochondrial ribosome small subunit (28S) which comprises a 12S rRNA and about 30 distinct proteins. Interacts with LIAT1.

The protein resides in the mitochondrion. The polypeptide is Small ribosomal subunit protein uS14m (mrps-14) (Caenorhabditis elegans).